Consider the following 318-residue polypeptide: Bis(5'-nucleosyl)-tetraphosphatase, symmetrical (318 aa).

The disordered stretch occupies residues 269 to 318 (PGREVTGPAPVARAPRRPRERLGRQRSRGNRGNAGNTAVPAKPPVDTPQD). Over residues 282–297 (APRRPRERLGRQRSRG) the composition is skewed to basic residues. A compositionally biased stretch (pro residues) spans 309–318 (AKPPVDTPQD).

It belongs to the Ap4A hydrolase family.

The catalysed reaction is P(1),P(4)-bis(5'-adenosyl) tetraphosphate + H2O = 2 ADP + 2 H(+). In terms of biological role, hydrolyzes diadenosine 5',5'''-P1,P4-tetraphosphate to yield ADP. This chain is Bis(5'-nucleosyl)-tetraphosphatase, symmetrical, found in Xanthomonas oryzae pv. oryzae (strain MAFF 311018).